The following is a 318-amino-acid chain: Ribose-phosphate pyrophosphokinase 2 (318 aa).

ATP is bound at residue 96 to 101; the sequence is RQDKKD. 4 residues coordinate Mg(2+): Asp-128, His-130, Asp-139, and Asp-143. Residue His-130 participates in ATP binding. The tract at residues 212–227 is binding of phosphoribosylpyrophosphate; sequence KDRVAILVDDMADTCG.

Belongs to the ribose-phosphate pyrophosphokinase family. As to quaternary structure, homodimer. The active form is probably a hexamer composed of 3 homodimers. Mg(2+) serves as cofactor.

It carries out the reaction D-ribose 5-phosphate + ATP = 5-phospho-alpha-D-ribose 1-diphosphate + AMP + H(+). The protein operates within metabolic intermediate biosynthesis; 5-phospho-alpha-D-ribose 1-diphosphate biosynthesis; 5-phospho-alpha-D-ribose 1-diphosphate from D-ribose 5-phosphate (route I): step 1/1. Activated by magnesium and inorganic phosphate. Its function is as follows. Catalyzes the synthesis of phosphoribosylpyrophosphate (PRPP) that is essential for nucleotide synthesis. This chain is Ribose-phosphate pyrophosphokinase 2 (Prps2), found in Rattus norvegicus (Rat).